A 117-amino-acid chain; its full sequence is Large ribosomal subunit protein uL24 (117 aa).

It belongs to the universal ribosomal protein uL24 family. In terms of assembly, part of the 50S ribosomal subunit.

Functionally, one of two assembly initiator proteins, it binds directly to the 5'-end of the 23S rRNA, where it nucleates assembly of the 50S subunit. Its function is as follows. One of the proteins that surrounds the polypeptide exit tunnel on the outside of the subunit. In Nostoc punctiforme (strain ATCC 29133 / PCC 73102), this protein is Large ribosomal subunit protein uL24.